A 440-amino-acid polypeptide reads, in one-letter code: (S)-N-methylcoclaurine 3'-hydroxylase-like protein (440 aa).

The helical; Signal-anchor for type II membrane protein transmembrane segment at 2–21 threads the bilayer; the sequence is EIVTVALIAIVFTTFLYLIV. Residue Cys-430 coordinates heme.

The protein belongs to the cytochrome P450 family. Heme serves as cofactor.

The protein localises to the membrane. In terms of biological role, involved in the biosynthesis of benzylisoquinoline alkaloids. Probably involved in papaverine biosynthesis since its transcripts are abundant only in cultivars with substantial papaverine accumulation. May catalyze the 3'-hydroxylation of (S)-coclaurine. The polypeptide is (S)-N-methylcoclaurine 3'-hydroxylase-like protein (Papaver somniferum (Opium poppy)).